The chain runs to 202 residues: NADH-quinone oxidoreductase subunit B (202 aa).

Residues Cys-81, Cys-82, Cys-146, and Cys-176 each contribute to the [4Fe-4S] cluster site.

The protein belongs to the complex I 20 kDa subunit family. In terms of assembly, NDH-1 is composed of 14 different subunits. Subunits NuoB, C, D, E, F, and G constitute the peripheral sector of the complex. [4Fe-4S] cluster is required as a cofactor.

Its subcellular location is the cell inner membrane. It catalyses the reaction a quinone + NADH + 5 H(+)(in) = a quinol + NAD(+) + 4 H(+)(out). In terms of biological role, NDH-1 shuttles electrons from NADH, via FMN and iron-sulfur (Fe-S) centers, to quinones in the respiratory chain. The immediate electron acceptor for the enzyme in this species is believed to be ubiquinone. Couples the redox reaction to proton translocation (for every two electrons transferred, four hydrogen ions are translocated across the cytoplasmic membrane), and thus conserves the redox energy in a proton gradient. This Bradyrhizobium diazoefficiens (strain JCM 10833 / BCRC 13528 / IAM 13628 / NBRC 14792 / USDA 110) protein is NADH-quinone oxidoreductase subunit B.